Consider the following 357-residue polypeptide: UDP-N-acetylglucosamine--N-acetylmuramyl-(pentapeptide) pyrophosphoryl-undecaprenol N-acetylglucosamine transferase (357 aa).

UDP-N-acetyl-alpha-D-glucosamine contacts are provided by residues 15-17 (SGG), Asn-125, Ser-190, and Gln-290.

This sequence belongs to the glycosyltransferase 28 family. MurG subfamily.

The protein localises to the cell inner membrane. The catalysed reaction is di-trans,octa-cis-undecaprenyl diphospho-N-acetyl-alpha-D-muramoyl-L-alanyl-D-glutamyl-meso-2,6-diaminopimeloyl-D-alanyl-D-alanine + UDP-N-acetyl-alpha-D-glucosamine = di-trans,octa-cis-undecaprenyl diphospho-[N-acetyl-alpha-D-glucosaminyl-(1-&gt;4)]-N-acetyl-alpha-D-muramoyl-L-alanyl-D-glutamyl-meso-2,6-diaminopimeloyl-D-alanyl-D-alanine + UDP + H(+). It functions in the pathway cell wall biogenesis; peptidoglycan biosynthesis. Its function is as follows. Cell wall formation. Catalyzes the transfer of a GlcNAc subunit on undecaprenyl-pyrophosphoryl-MurNAc-pentapeptide (lipid intermediate I) to form undecaprenyl-pyrophosphoryl-MurNAc-(pentapeptide)GlcNAc (lipid intermediate II). The protein is UDP-N-acetylglucosamine--N-acetylmuramyl-(pentapeptide) pyrophosphoryl-undecaprenol N-acetylglucosamine transferase of Chlamydia pneumoniae (Chlamydophila pneumoniae).